We begin with the raw amino-acid sequence, 311 residues long: MSTDLLDRTVAEIAEEMAQRTDRGEVANYIPELARVDPQGFGLVVIDADGHVAAGGDADLPFSIQSISKVFTLTLALGKAGDRVWRRVGREPSGTAFNSIVQLERERGIPRNPFINAGAIAVTDLILSGHQPREALGEILRFMQFLAADSAITIDEAVAASEQRTGFRNAALANYMKSFGVLDNPVDYTLGVYFHHCAIAMSCRQLAMAGRFLAHNGRNPSTGHNVVSAQRARRINALMLTCGHYDGSGEFAYRVGLPGKSGVGGGVLAVAPGKASIAVWSPGLDASGNSHLGRIALEALTKRLGWSIFGV.

Substrate is bound by residues S66, N116, E162, N169, Y193, Y245, and V263.

The protein belongs to the glutaminase family. Homotetramer.

The catalysed reaction is L-glutamine + H2O = L-glutamate + NH4(+). The chain is Glutaminase from Rhodopseudomonas palustris (strain BisB5).